We begin with the raw amino-acid sequence, 189 residues long: Photosystem I assembly protein Ycf4 (189 aa).

Transmembrane regions (helical) follow at residues 31–51 and 70–90; these read TVILVGASGFFLVGISSYFGF and VMSFYGVAGILLSVYLWLTII.

Belongs to the Ycf4 family.

Its subcellular location is the plastid. The protein localises to the chloroplast thylakoid membrane. Seems to be required for the assembly of the photosystem I complex. The polypeptide is Photosystem I assembly protein Ycf4 (Chlorokybus atmophyticus (Soil alga)).